The chain runs to 505 residues: ATP synthase subunit alpha (505 aa).

170–177 (GDRQTGKS) contributes to the ATP binding site.

It belongs to the ATPase alpha/beta chains family. As to quaternary structure, F-type ATPases have 2 components, CF(1) - the catalytic core - and CF(0) - the membrane proton channel. CF(1) has five subunits: alpha(3), beta(3), gamma(1), delta(1), epsilon(1). CF(0) has four main subunits: a(1), b(1), b'(1) and c(9-12).

Its subcellular location is the cellular thylakoid membrane. The catalysed reaction is ATP + H2O + 4 H(+)(in) = ADP + phosphate + 5 H(+)(out). In terms of biological role, produces ATP from ADP in the presence of a proton gradient across the membrane. The alpha chain is a regulatory subunit. The polypeptide is ATP synthase subunit alpha (Prochlorococcus marinus (strain AS9601)).